A 196-amino-acid polypeptide reads, in one-letter code: Protein GrpE (196 aa).

The tract at residues 1 to 41 (MSSKEQKTPEGQAPEEIITEQHDDVEAVEPEVSAEQVDPRD) is disordered.

Belongs to the GrpE family. In terms of assembly, homodimer.

The protein resides in the cytoplasm. Functionally, participates actively in the response to hyperosmotic and heat shock by preventing the aggregation of stress-denatured proteins, in association with DnaK and GrpE. It is the nucleotide exchange factor for DnaK and may function as a thermosensor. Unfolded proteins bind initially to DnaJ; upon interaction with the DnaJ-bound protein, DnaK hydrolyzes its bound ATP, resulting in the formation of a stable complex. GrpE releases ADP from DnaK; ATP binding to DnaK triggers the release of the substrate protein, thus completing the reaction cycle. Several rounds of ATP-dependent interactions between DnaJ, DnaK and GrpE are required for fully efficient folding. The chain is Protein GrpE from Klebsiella pneumoniae (strain 342).